The primary structure comprises 893 residues: TBC domain-containing protein kinase-like protein (893 aa).

The Protein kinase domain occupies 1-273 (MFPLKDAEMG…PDELMKDQVF (273 aa)). The region spanning 466-651 (DIPPLMRGLT…HLWDTLLLGN (186 aa)) is the Rab-GAP TBC domain.

Belongs to the protein kinase superfamily. As to quaternary structure, component of the FERRY complex composed of five subunits, TBCK, PPP1R21, FERRY3, CRYZL1 and GATD1 with a ratio of 1:2:1:2:4, respectively.

Its subcellular location is the cytoplasm. The protein resides in the cytoskeleton. The protein localises to the spindle. It is found in the midbody. It localises to the early endosome. Its function is as follows. Component of the FERRY complex (Five-subunit Endosomal Rab5 and RNA/ribosome intermediary). The FERRY complex directly interacts with mRNAs and RAB5A, and functions as a RAB5A effector involved in the localization and the distribution of specific mRNAs most likely by mediating their endosomal transport. The complex recruits mRNAs and ribosomes to early endosomes through direct mRNA-interaction. Also involved in the modulation of mTOR signaling and expression of mTOR complex components. Involved in the control of actin-cytoskeleton organization. In Mus musculus (Mouse), this protein is TBC domain-containing protein kinase-like protein (Tbck).